The chain runs to 636 residues: Transcriptional repressor CTCFL (636 aa).

3 disordered regions span residues Lys-17 to Val-38, Glu-160 to Glu-195, and Leu-222 to Phe-257. Over residues Glu-160–Glu-170 the composition is skewed to acidic residues. A compositionally biased stretch (basic residues) spans Ala-242–Lys-251. C2H2-type zinc fingers lie at residues Phe-257–His-279, His-285–His-307, His-313–His-336, Phe-342–His-364, Phe-370–His-392, Tyr-398–His-421, Tyr-428–His-451, Met-458–His-480, Phe-486–His-508, Phe-514–His-537, and His-546–His-572. Residues Gln-562–Gly-624 are disordered. The span at Cys-568 to Pro-583 shows a compositional bias: basic and acidic residues.

It belongs to the CTCF zinc-finger protein family. Interacts with histones, PRMT7 and SETD1A. Interacts (via N-terminus) with BAG6/BAT3. Testis-specific.

The protein resides in the cytoplasm. The protein localises to the nucleus. Testis-specific DNA binding protein responsible for insulator function, nuclear architecture and transcriptional control, which probably acts by recruiting epigenetic chromatin modifiers. Plays a key role in gene imprinting in male germline, by participating in the establishment of differential methylation at the IGF2/H19 imprinted control region (ICR). Directly binds the unmethylated H19 ICR and recruits the PRMT7 methyltransferase, leading to methylate histone H4 'Arg-3' to form H4R3sme2. This probably leads to recruit de novo DNA methyltransferases at these sites. Seems to act as tumor suppressor. In association with DNMT1 and DNMT3B, involved in activation of BAG1 gene expression by binding to its promoter. Required for dimethylation of H3 lysine 4 (H3K4me2) of MYC and BRCA1 promoters. The sequence is that of Transcriptional repressor CTCFL (Ctcfl) from Mus musculus (Mouse).